A 332-amino-acid polypeptide reads, in one-letter code: Adenosine receptor A2b (332 aa).

Over 1–8 the chain is Extracellular; it reads MQLETQDA. The helical transmembrane segment at 9 to 33 threads the bilayer; it reads LYVALELVIAALAVAGNVLVCAAVG. Over 34 to 43 the chain is Cytoplasmic; that stretch reads ASSALQTPTN. Residues 44–67 traverse the membrane as a helical segment; that stretch reads YFLVSLATADVAVGLFAIPFAITI. Over 68–78 the chain is Extracellular; sequence SLGFCTDFHGC. Cys78 and Cys171 are disulfide-bonded. A helical transmembrane segment spans residues 79–101; that stretch reads LFLACFVLVLTQSSIFSLLAVAV. Topologically, residues 102-121 are cytoplasmic; sequence DRYLAIRVPLRYKGLVTGTR. The chain crosses the membrane as a helical span at residues 122-144; sequence ARGIIAVLWVLAFGIGLTPFLGW. At 145-178 the chain is on the extracellular side; sequence NSKDSATSNCTELGDGIANKSCCPVTCLFENVVP. N-linked (GlcNAc...) asparagine glycosylation is found at Asn153 and Asn163. Residue Glu174 participates in adenosine binding. The helical transmembrane segment at 179–203 threads the bilayer; sequence MSYMVYFNFFGCVLPPLLIMLVIYI. Residues 204–235 are Cytoplasmic-facing; the sequence is KIFMVACKQLQRMELMDHSRTTLQREIHAAKS. Residues 236-259 traverse the membrane as a helical segment; sequence LAMIVGIFALCWLPVHAINCITLF. Asn254 serves as a coordination point for adenosine. Over 260 to 267 the chain is Extracellular; the sequence is HPALAKDK. Residues 268 to 291 traverse the membrane as a helical segment; that stretch reads PKWVMNVAILLSHANSVVNPIVYA. 2 residues coordinate adenosine: Ser279 and His280. Residues 292 to 332 lie on the Cytoplasmic side of the membrane; the sequence is YRNRDFRYSFHKIISRYVLCQAETKGGSGQAGAQSTLSLGL. Cys311 carries S-palmitoyl cysteine lipidation.

Belongs to the G-protein coupled receptor 1 family.

The protein resides in the cell membrane. In terms of biological role, receptor for adenosine. The activity of this receptor is mediated by G proteins which activate adenylyl cyclase. The chain is Adenosine receptor A2b (Adora2b) from Mus musculus (Mouse).